The primary structure comprises 730 residues: Exostosin-1a (730 aa).

At M1–R6 the chain is on the cytoplasmic side. Residues Y7–A27 traverse the membrane as a helical; Signal-anchor for type II membrane protein segment. Residues S28–L730 are Lumenal-facing. An N-linked (GlcNAc...) asparagine glycan is attached at N314. Positions 533, 549, 550, 551, 637, 638, and 685 each coordinate UDP-N-acetyl-alpha-D-glucosamine. D551 contributes to the Mn(2+) binding site. The cysteines at positions 636 and 688 are disulfide-linked. D638 is a catalytic residue.

It belongs to the glycosyltransferase 47 family. It depends on Mn(2+) as a cofactor.

It is found in the endoplasmic reticulum membrane. The catalysed reaction is 3-O-{[(1-&gt;4)-beta-D-GlcA-(1-&gt;4)-alpha-D-GlcNAc](n)-(1-&gt;4)-beta-D-GlcA-(1-&gt;3)-beta-D-Gal-(1-&gt;3)-beta-D-Gal-(1-&gt;4)-beta-D-Xyl}-L-seryl-[protein] + UDP-N-acetyl-alpha-D-glucosamine = 3-O-{alpha-D-GlcNAc-[(1-&gt;4)-beta-D-GlcA-(1-&gt;4)-alpha-D-GlcNAc](n)-(1-&gt;4)-beta-D-GlcA-(1-&gt;3)-beta-D-Gal-(1-&gt;3)-beta-D-Gal-(1-&gt;4)-beta-D-Xyl}-L-seryl-[protein] + UDP + H(+). The enzyme catalyses 3-O-{alpha-D-GlcNAc-[(1-&gt;4)-beta-D-GlcA-(1-&gt;4)-alpha-D-GlcNAc](n)-(1-&gt;4)-beta-D-GlcA-(1-&gt;3)-beta-D-Gal-(1-&gt;3)-beta-D-Gal-(1-&gt;4)-beta-D-Xyl}-L-seryl-[protein] + UDP-alpha-D-glucuronate = 3-O-{[(1-&gt;4)-beta-D-GlcA-(1-&gt;4)-alpha-D-GlcNAc](n+1)-(1-&gt;4)-beta-D-GlcA-(1-&gt;3)-beta-D-Gal-(1-&gt;3)-beta-D-Gal-(1-&gt;4)-beta-D-Xyl}-L-seryl-[protein] + UDP + H(+). It functions in the pathway protein modification; protein glycosylation. Functionally, glycosyltransferase required for the biosynthesis of heparan-sulfate. This Danio rerio (Zebrafish) protein is Exostosin-1a (ext1a).